Reading from the N-terminus, the 1382-residue chain is MKPPTVHIPGIVVLLFTLVQRSSEECREALRRSGTDVNVSYSLPHFIANTTLLNIVVHRDDLYLGAVNKIYVLDKNLQDFVEYPTGPVLEHPDCAPCENCSAIAHSSKADLRDNVNMALLIETYYHYEQLIICGSVDGGACWRFPLPLGEPTDFHSKKHCMFSHQADEESKDCPDCIVSTLGTKVLLVEKDRFVNFFVGNTINSSSHPFSSLHSISVRRLKETLDGFKFLTDQSYIDVLPQFRDSYPIKYIHAFESNQFIYFLTVQKETVESQTFHTRIIRFCSMDSELHSYMEMPLECILTEKRRRRSTNKEVFNVLQAAYVSKPGAHLARQIGTGLNDDILYGVFAQSKPDSAEPMNRSAICAFPIKYINEFFSKIVNKNNVRCLQHFYGNHHRHCANRTFQWNSSGCEVRDDEYRMEFTTPLQRVDLSMGKFSHVLLTSISTFIKGNLTVANLGTAEGRFMQVVISRSDPPSPHVDFLLDNHPVSPEVIVVNSSMPDGYTLVITGKKITKIPLNGLGCDHFKSCRQCLSAPSFVQCGWCDDRCTTAEKCDYGLWTQDTCPPTIFEIIPSSAPLEGGTMLTVCGWDFGFQKNNKFELRKTKVLVGNQSCTLFFNESSTNKLKCTAGPSTQPRLNISISVSNAQGGRRSKTFSYVDPKITSISPRYGPIAGGTLLTLTGKYLNCGSSRHISIGGKTCTLRSVSEHVLECYTPSQTVPTLYAVKMKIDLANREAGTFIYKEDPVIHEIHPTKSFLSGGSTITGFGKNLNGSSAPKMIIQVAEVGRNFTVACQSRSNAEIICCTTPSLQQLNLPPPFKTKAFFVFDGVQSANFDLIYVHNPVFKLFEKPVMISMGNKHVLEIKGDHIDSEAVKGEVLKVGNKSCENVLLNLESVFCTVPRDLLKVNTELNIEWQQAVSSTILGKVIVLPDQNFTGLIAGVASISVLLLLFLGLFLWMKKKKQIKDLGSELVRYDPRVHTPHLDRLVSARSISPTAEMVSNESVDYRATFPEDQFPNSSQNGSCRQAHYPLADLSPILSSGDSNPSSPLLQSNVHIDISALNPDLVQAVQHVVIGPDSLMVHFTEIIGRGHFGCVYHGTLLDNDDKKIHCAVKSLNRITDIEEVSQFLTEGIIMKDFSHPNVLSLLGICLRREGSPLVVLPYMKHGDLRNFIRNESHNPTVKDLIGFGLQVAKGMKYLASKKFVHRDLAARNCMLDEKFTVKVADFGLARDMYDKEYYSVHNKTGAKLPVKWMALESLQTQKFTSKSDVWSFGVLLWELMTRGAPPYPDVNTFDITVYLLQGRRLLQPEYCPDPLFEVMLKCWHPNAEMRPSFSELVSKIAVIFSTFIGEHYVHVNATYVNVKCVAPYPSLLSSQDAPDRVVDT.

Positions 1–24 (MKPPTVHIPGIVVLLFTLVQRSSE) are cleaved as a signal peptide. Residues 25 to 933 (ECREALRRSG…VIVLPDQNFT (909 aa)) lie on the Extracellular side of the membrane. The Sema domain occupies 27–516 (REALRRSGTD…TGKKITKIPL (490 aa)). Asn-38, Asn-49, and Asn-99 each carry an N-linked (GlcNAc...) asparagine glycan. 4 disulfides stabilise this stretch: Cys-94–Cys-100, Cys-97–Cys-160, Cys-133–Cys-141, and Cys-173–Cys-176. Asn-203 and Asn-359 each carry an N-linked (GlcNAc...) asparagine glycan. Intrachain disulfides connect Cys-299-Cys-364 and Cys-386-Cys-398. N-linked (GlcNAc...) asparagine glycosylation is found at Asn-400, Asn-406, Asn-450, and Asn-495. Disulfide bonds link Cys-521–Cys-539, Cys-527–Cys-562, Cys-530–Cys-546, and Cys-542–Cys-552. IPT/TIG domains are found at residues 564–656 (PTIF…FSYV), 658–740 (PKIT…FIYK), and 743–837 (PVIH…LIYV). Thr-583 is a glycosylation site (O-linked (Man) threonine). N-linked (GlcNAc...) asparagine glycosylation is found at Asn-608, Asn-616, and Asn-636. O-linked (Man) threonine glycans are attached at residues Thr-677 and Thr-762. Asn-769, Asn-786, Asn-880, and Asn-931 each carry an N-linked (GlcNAc...) asparagine glycan. A helical membrane pass occupies residues 934–956 (GLIAGVASISVLLLLFLGLFLWM). Residues 957–1382 (KKKKQIKDLG…QDAPDRVVDT (426 aa)) lie on the Cytoplasmic side of the membrane. Phosphoserine is present on Ser-967. Thr-978 carries the post-translational modification Phosphothreonine. Phosphoserine occurs at positions 991, 998, and 1001. Phosphotyrosine is present on Tyr-1004. Residues 1079–1346 (VHFTEIIGRG…KIAVIFSTFI (268 aa)) enclose the Protein kinase domain. ATP is bound by residues 1085–1093 (IGRGHFGCV) and Lys-1111. Catalysis depends on Asp-1205, which acts as the Proton acceptor. The tract at residues 1213–1382 (LDEKFTVKVA…QDAPDRVVDT (170 aa)) is interaction with RANBP9. Tyr-1231 carries the phosphotyrosine modification. Residues Tyr-1235 and Tyr-1236 each carry the phosphotyrosine; by autocatalysis modification. Phosphothreonine is present on Thr-1290. Positions 1321–1360 (WHPNAEMRPSFSELVSKIAVIFSTFIGEHYVHVNATYVNV) are interaction with MUC20. 2 positions are modified to phosphotyrosine; by autocatalysis: Tyr-1350 and Tyr-1357. Phosphotyrosine is present on Tyr-1366.

Belongs to the protein kinase superfamily. Tyr protein kinase family. Heterodimer made of an alpha chain (50 kDa) and a beta chain (145 kDa) which are disulfide linked. Binds PLXNB1. Interacts when phosphorylated with downstream effectors including STAT3, PIK3R1, SRC, PCLG1, GRB2 and GAB1. Interacts with SPSB1, SPSB2 and SPSB4. Interacts with INPP5D/SHIP1. When phosphorylated at Tyr-1357, interacts with INPPL1/SHIP2. Interacts with RANBP9 and RANBP10, as well as SPSB1, SPSB2, SPSB3 and SPSB4. SPSB1 binding occurs in the presence and in the absence of HGF, however HGF treatment has a positive effect on this interaction. Interacts with MUC20; prevents interaction with GRB2 and suppresses hepatocyte growth factor-induced cell proliferation. Interacts with GRB10. Interacts with PTPN1 and PTPN2. Interacts with HSP90AA1 and HSP90AB1; the interaction suppresses MET kinase activity. Interacts with tensin TNS3. Interacts (when phosphorylated) with tensin TNS4 (via SH2 domain); the interaction increases MET protein stability by inhibiting MET endocytosis and subsequent lysosomal degradation. Autophosphorylated in response to ligand binding on Tyr-1235 and Tyr-1236 in the kinase domain leading to further phosphorylation of Tyr-1350 and Tyr-1357 in the C-terminal multifunctional docking site. Dephosphorylated by PTPRJ at Tyr-1350 and Tyr-1366. Dephosphorylated by PTPN1 and PTPN2. Post-translationally, ubiquitinated. Ubiquitination by CBL regulates the receptor stability and activity through proteasomal degradation. In terms of processing, O-mannosylation of IPT/TIG domains by TMEM260 is required for protein maturation. O-mannosylated residues are composed of single mannose glycans that are not elongated or modified.

The protein resides in the membrane. It carries out the reaction L-tyrosyl-[protein] + ATP = O-phospho-L-tyrosyl-[protein] + ADP + H(+). In its inactive state, the C-terminal tail interacts with the catalytic domain and inhibits the kinase activity. Upon ligand binding, the C-terminal tail is displaced and becomes phosphorylated, thus increasing the kinase activity. Functionally, receptor tyrosine kinase that transduces signals from the extracellular matrix into the cytoplasm by binding to hepatocyte growth factor/HGF ligand. Regulates many physiological processes including proliferation, scattering, morphogenesis and survival. Ligand binding at the cell surface induces autophosphorylation of MET on its intracellular domain that provides docking sites for downstream signaling molecules. Following activation by ligand, interacts with the PI3-kinase subunit PIK3R1, PLCG1, SRC, GRB2, STAT3 or the adapter GAB1. Recruitment of these downstream effectors by MET leads to the activation of several signaling cascades including the RAS-ERK, PI3 kinase-AKT, or PLCgamma-PKC. The RAS-ERK activation is associated with the morphogenetic effects while PI3K/AKT coordinates prosurvival effects. During embryonic development, MET signaling plays a role in gastrulation, development and migration of muscles and neuronal precursors, angiogenesis and kidney formation. In adults, participates in wound healing as well as organ regeneration and tissue remodeling. Also promotes differentiation and proliferation of hematopoietic cells. The polypeptide is Hepatocyte growth factor receptor (MET) (Ornithorhynchus anatinus (Duckbill platypus)).